Reading from the N-terminus, the 151-residue chain is uncharacterized protein (151 aa).

Residues 1 to 32 (MEEAEKAKRRSIELLNETRNCAYSSFVALAEA) form the signal peptide. A helical transmembrane segment spans residues 45–67 (AIGFAGGISGSGHICGALWGSIA).

Its subcellular location is the membrane. This is an uncharacterized protein from Archaeoglobus fulgidus (strain ATCC 49558 / DSM 4304 / JCM 9628 / NBRC 100126 / VC-16).